The chain runs to 312 residues: uncharacterized protein (312 aa).

The next 10 helical transmembrane spans lie at Ala13–Ile33, Ala45–Tyr65, Ala81–Asn101, Ala105–Cys125, Ile133–Trp153, Met162–Ser182, Gly198–Met218, Met229–Leu249, Ala260–Gly280, and Leu283–Tyr303. The 131-residue stretch at Ala173–Tyr303 folds into the EamA domain.

This sequence belongs to the EamA transporter family.

It is found in the cell membrane. This is an uncharacterized protein from Bacillus subtilis (strain 168).